Reading from the N-terminus, the 660-residue chain is 1-deoxy-D-xylulose-5-phosphate synthase (660 aa).

Residues H86 and 127-129 (AHS) each bind thiamine diphosphate. D164 serves as a coordination point for Mg(2+). Thiamine diphosphate is bound by residues 165-166 (GS), N196, Y306, and E388. Residue N196 coordinates Mg(2+).

The protein belongs to the transketolase family. DXPS subfamily. As to quaternary structure, homodimer. Mg(2+) serves as cofactor. It depends on thiamine diphosphate as a cofactor.

It carries out the reaction D-glyceraldehyde 3-phosphate + pyruvate + H(+) = 1-deoxy-D-xylulose 5-phosphate + CO2. The protein operates within metabolic intermediate biosynthesis; 1-deoxy-D-xylulose 5-phosphate biosynthesis; 1-deoxy-D-xylulose 5-phosphate from D-glyceraldehyde 3-phosphate and pyruvate: step 1/1. Its function is as follows. Catalyzes the acyloin condensation reaction between C atoms 2 and 3 of pyruvate and glyceraldehyde 3-phosphate to yield 1-deoxy-D-xylulose-5-phosphate (DXP). This chain is 1-deoxy-D-xylulose-5-phosphate synthase, found in Gluconobacter oxydans (strain 621H) (Gluconobacter suboxydans).